A 409-amino-acid polypeptide reads, in one-letter code: Phosphatidylglycerol--prolipoprotein diacylglyceryl transferase (409 aa).

Helical transmembrane passes span 18–38 (PVPLRAYALMIIIGVFVAVFV), 48–68 (MDPMVASEVAYWAVPFGIVGA), 93–113 (IWNGGLGIWGAIAGGAFGAWL), and 119–139 (GISLALFGDAAAPGIILAQAI). An a 1,2-diacyl-sn-glycero-3-phospho-(1'-sn-glycerol)-binding site is contributed by arginine 141. 2 helical membrane-spanning segments follow: residues 177-197 (QPTFLYECLWNLVVAGILLVV) and 234-254 (ILGLRVNIWTSIVVCLGALLA). The disordered stretch occupies residues 273–409 (ALGIARSRPA…AVPPEEPQLP (137 aa)). 3 stretches are compositionally biased toward low complexity: residues 297 to 309 (AAAPDSAGPDSAA), 320 to 335 (PDLGGPDPADPGSAGS), and 348 to 375 (TATTATTATTATTATTATTATTATTATT).

This sequence belongs to the Lgt family.

It localises to the cell membrane. It catalyses the reaction L-cysteinyl-[prolipoprotein] + a 1,2-diacyl-sn-glycero-3-phospho-(1'-sn-glycerol) = an S-1,2-diacyl-sn-glyceryl-L-cysteinyl-[prolipoprotein] + sn-glycerol 1-phosphate + H(+). It participates in protein modification; lipoprotein biosynthesis (diacylglyceryl transfer). In terms of biological role, catalyzes the transfer of the diacylglyceryl group from phosphatidylglycerol to the sulfhydryl group of the N-terminal cysteine of a prolipoprotein, the first step in the formation of mature lipoproteins. This is Phosphatidylglycerol--prolipoprotein diacylglyceryl transferase from Frankia casuarinae (strain DSM 45818 / CECT 9043 / HFP020203 / CcI3).